Here is a 215-residue protein sequence, read N- to C-terminus: Cytochrome b6 (215 aa).

Residues 32-52 (IFYCLGGIVFVSFLIQVATGF) traverse the membrane as a helical segment. Heme c is bound at residue Cys-35. Positions 86 and 100 each coordinate heme b. 3 helical membrane passes run 90–110 (ASMM…TGGF), 116–136 (LTWV…VTGY), and 186–206 (LHTF…FLMI). Residues His-187 and His-202 each coordinate heme b.

The protein belongs to the cytochrome b family. PetB subfamily. As to quaternary structure, the 4 large subunits of the cytochrome b6-f complex are cytochrome b6, subunit IV (17 kDa polypeptide, PetD), cytochrome f and the Rieske protein, while the 4 small subunits are PetG, PetL, PetM and PetN. The complex functions as a dimer. The cofactor is heme b. It depends on heme c as a cofactor.

The protein localises to the plastid. Its subcellular location is the chloroplast thylakoid membrane. Functionally, component of the cytochrome b6-f complex, which mediates electron transfer between photosystem II (PSII) and photosystem I (PSI), cyclic electron flow around PSI, and state transitions. The polypeptide is Cytochrome b6 (Porphyra purpurea (Red seaweed)).